The sequence spans 274 residues: Protein RecA (274 aa).

Residue Gly43–Thr50 coordinates ATP.

This sequence belongs to the RecA family.

The protein localises to the cytoplasm. Its function is as follows. Can catalyze the hydrolysis of ATP in the presence of single-stranded DNA, the ATP-dependent uptake of single-stranded DNA by duplex DNA, and the ATP-dependent hybridization of homologous single-stranded DNAs. It interacts with LexA causing its activation and leading to its autocatalytic cleavage. This chain is Protein RecA, found in Neisseria flavescens.